The primary structure comprises 94 residues: Putative pterin-4-alpha-carbinolamine dehydratase (94 aa).

The protein belongs to the pterin-4-alpha-carbinolamine dehydratase family.

It catalyses the reaction (4aS,6R)-4a-hydroxy-L-erythro-5,6,7,8-tetrahydrobiopterin = (6R)-L-erythro-6,7-dihydrobiopterin + H2O. This Caulobacter vibrioides (strain ATCC 19089 / CIP 103742 / CB 15) (Caulobacter crescentus) protein is Putative pterin-4-alpha-carbinolamine dehydratase.